A 336-amino-acid chain; its full sequence is Cytoskeleton protein RodZ (336 aa).

Topologically, residues 1–111 are cytoplasmic; the sequence is MNTEATHDQN…LGKRRKKRDG (111 aa). The 53-residue stretch at 19–71 folds into the HTH cro/C1-type domain; it reads LRNAREQLGLSQQAVAERLCLKVSTVRDIEEDKAPADLASTFLRGYIRSYARL. A DNA-binding region (H-T-H motif) is located at residues 30-49; the sequence is QQAVAERLCLKVSTVRDIEE. A helical; Signal-anchor for type II membrane protein membrane pass occupies residues 112–132; that stretch reads WLMTFTWLVLFVVIGLSGAWW. Over 133-336 the chain is Periplasmic; sequence WQDHKAQQEE…TLNAEQSPAQ (204 aa). Polar residues predominate over residues 148-164; that stretch reads DQSSAELNNNQSQSVPL. The interval 148–248 is disordered; that stretch reads DQSSAELNNN…TDQAGVTTPA (101 aa). Residues 165–201 show a composition bias toward low complexity; it reads DTSTTTDQAMATTPTSPVDTTATNTQTPAATTAPSPT. The segment covering 202 to 217 has biased composition (polar residues); that stretch reads VDSQQNAVVPPSQANV. Positions 219 to 236 are enriched in low complexity; the sequence is TAATPAPAATTMPDGAAP.

This sequence belongs to the RodZ family.

The protein localises to the cell inner membrane. In terms of biological role, cytoskeletal protein that is involved in cell-shape control through regulation of the length of the long axis. The protein is Cytoskeleton protein RodZ of Escherichia coli (strain SMS-3-5 / SECEC).